The sequence spans 152 residues: Aspartate carbamoyltransferase regulatory chain (152 aa).

The Zn(2+) site is built by Cys108, Cys113, Cys136, and Cys139.

It belongs to the PyrI family. Contains catalytic and regulatory chains. Zn(2+) serves as cofactor.

Its function is as follows. Involved in allosteric regulation of aspartate carbamoyltransferase. This Thermococcus kodakarensis (strain ATCC BAA-918 / JCM 12380 / KOD1) (Pyrococcus kodakaraensis (strain KOD1)) protein is Aspartate carbamoyltransferase regulatory chain.